Consider the following 156-residue polypeptide: Large ribosomal subunit protein uL23 (156 aa).

A compositionally biased stretch (basic and acidic residues) spans 1–19; sequence MAPKAKKEAPAPPKVEAKA. Residues 1-67 are disordered; sequence MAPKAKKEAP…PKYPRKSAPR (67 aa). Ala2 is subject to N,N,N-trimethylalanine. Lys14 is covalently cross-linked (Glycyl lysine isopeptide (Lys-Gly) (interchain with G-Cter in SUMO2)). Positions 20-67 are enriched in basic residues; it reads KALKAKKAVLKGVHSHKKKKIRTSPTFRRPKTLRLRRQPKYPRKSAPR. The segment at 32–74 is beta-like import receptor binding (BIB) domain; it reads VHSHKKKKIRTSPTFRRPKTLRLRRQPKYPRKSAPRRNKLDHY. Arg41 carries the post-translational modification Citrulline. A Phosphoserine modification is found at Ser43. Thr45 carries the phosphothreonine modification. Lys70 carries the post-translational modification N6-acetyllysine.

The protein belongs to the universal ribosomal protein uL23 family. As to quaternary structure, component of the large ribosomal subunit. Interacts with LYAR and GNL2. Interacts with MDM2; this interaction may promote MDM2-mediated p53/TP53 polyubiquitination. Directly interacts (via BIB domain) with IPO5, IPO7, KPNB1 and TNPO1; these interactions are involved in RPL23A nuclear import for the assembly of ribosomal subunits. Interacts with IPO8. N-terminus is methylated by METTL11A/NTM1. Post-translationally, citrullinated by PADI4.

Its subcellular location is the cytoplasm. It localises to the nucleus. Component of the large ribosomal subunit. The ribosome is a large ribonucleoprotein complex responsible for the synthesis of proteins in the cell. Binds a specific region on the 26S rRNA. May promote p53/TP53 degradation possibly through the stimulation of MDM2-mediated TP53 polyubiquitination. The polypeptide is Large ribosomal subunit protein uL23 (RPL23A) (Oryctolagus cuniculus (Rabbit)).